The chain runs to 229 residues: Demethylmenaquinone methyltransferase (229 aa).

S-adenosyl-L-methionine contacts are provided by residues threonine 57, aspartate 77, and 101–102; that span reads DV.

Belongs to the class I-like SAM-binding methyltransferase superfamily. MenG/UbiE family.

It carries out the reaction a 2-demethylmenaquinol + S-adenosyl-L-methionine = a menaquinol + S-adenosyl-L-homocysteine + H(+). It participates in quinol/quinone metabolism; menaquinone biosynthesis; menaquinol from 1,4-dihydroxy-2-naphthoate: step 2/2. Functionally, methyltransferase required for the conversion of demethylmenaquinol (DMKH2) to menaquinol (MKH2). In Chlamydia muridarum (strain MoPn / Nigg), this protein is Demethylmenaquinone methyltransferase.